Here is a 385-residue protein sequence, read N- to C-terminus: Deoxyguanosinetriphosphate triphosphohydrolase-like protein (385 aa).

The 136-residue stretch at 62 to 197 (RLTHSLEVAQ…VSLADDIAYS (136 aa)) folds into the HD domain.

The protein belongs to the dGTPase family. Type 2 subfamily.

The sequence is that of Deoxyguanosinetriphosphate triphosphohydrolase-like protein from Neorickettsia sennetsu (strain ATCC VR-367 / Miyayama) (Ehrlichia sennetsu).